Reading from the N-terminus, the 350-residue chain is MQVSDFHFDLPDELIARYPQSERTASRLLQLNGNTGAVKDGSFKDVLELVQAGDLVVFNNTRVIPARMFGRKESGGKLEVLVERMLDEKRFLAHVRSSKSPKPGTLVFLGEEDQYSAEMVARQDALFELHLKADKTILEVLEEIGHMPLPPYIDRPDEDADKERYQTVYNQKPGAVAAPTAGLHFDNQLLEQIKAKGAEFAYVTLHVGAGTFQPVKVDNILEHHMHSEYAEVPQEVVDAIKATKARGGRVIAVGTTSVRSLESAAQESLKNGTELMPFFGDTEIFIFPGYQYQLVDCLITNFHLPESTLIMLVSAFAGYDHTMNAYQHAVANQYRFFSYGDAMFIEKKTQ.

Belongs to the QueA family. Monomer.

The protein resides in the cytoplasm. The catalysed reaction is 7-aminomethyl-7-carbaguanosine(34) in tRNA + S-adenosyl-L-methionine = epoxyqueuosine(34) in tRNA + adenine + L-methionine + 2 H(+). The protein operates within tRNA modification; tRNA-queuosine biosynthesis. Transfers and isomerizes the ribose moiety from AdoMet to the 7-aminomethyl group of 7-deazaguanine (preQ1-tRNA) to give epoxyqueuosine (oQ-tRNA). The chain is S-adenosylmethionine:tRNA ribosyltransferase-isomerase from Vibrio vulnificus (strain YJ016).